The following is a 361-amino-acid chain: Peptide chain release factor 1 (361 aa).

N5-methylglutamine is present on glutamine 233. The tract at residues 282-310 (SKKQAERAQNRKSQVGSGDRSERIRTYNF) is disordered.

Belongs to the prokaryotic/mitochondrial release factor family. In terms of processing, methylated by PrmC. Methylation increases the termination efficiency of RF1.

It localises to the cytoplasm. Its function is as follows. Peptide chain release factor 1 directs the termination of translation in response to the peptide chain termination codons UAG and UAA. This chain is Peptide chain release factor 1, found in Treponema denticola (strain ATCC 35405 / DSM 14222 / CIP 103919 / JCM 8153 / KCTC 15104).